The primary structure comprises 188 residues: V-type ATP synthase subunit E (188 aa).

The protein belongs to the V-ATPase E subunit family.

Functionally, produces ATP from ADP in the presence of a proton gradient across the membrane. This is V-type ATP synthase subunit E from Thermus thermophilus (strain ATCC BAA-163 / DSM 7039 / HB27).